Reading from the N-terminus, the 132-residue chain is MKQLIRRLSRVADSAQYSLLRSDSQRPSRRSESFLRSSVTRRSKKQTSSVPEGHVPVYVGDEMERFVVSAELLNHPVFIGLLNRSAQEYGYEQKGVLQIPCHVLVFERIMESLRLGLPVPIDVQDLIGDGTI.

A disordered region spans residues serine 22 to histidine 54. Positions aspartate 23–serine 33 are enriched in basic and acidic residues.

The protein belongs to the ARG7 family. In terms of assembly, interacts with and inhibits PP2C-D subfamily of type 2C phosphatases such as PP2C67/PP2C-D1. As to expression, highly expressed in the steles of roots and hypocotyls.

Its subcellular location is the cytoplasm. Functionally, provide a mechanistic link between auxin and plasma membrane H(+)-ATPases (PM H(+)-ATPases, e.g. AHA1 and AHA2), and triggers PM H(+)-ATPases activity by promoting phosphorylation of their C-terminal autoinhibitory domain as a result of PP2C-D subfamily of type 2C phosphatases inhibition, thus leading to the acidification of the apoplast and the facilitation of solutes and water uptake to drive cell expansion. Plays a role in the regulation of cell expansion, root meristem patterning and auxin transport. This Arabidopsis thaliana (Mouse-ear cress) protein is Auxin-responsive protein SAUR72.